A 290-amino-acid chain; its full sequence is Formamidopyrimidine-DNA glycosylase (290 aa).

The active-site Schiff-base intermediate with DNA is the proline 2. The Proton donor role is filled by glutamate 3. The active-site Proton donor; for beta-elimination activity is lysine 58. Residues histidine 97, arginine 122, and lysine 165 each coordinate DNA. The segment at 250–290 (KVYGREGEPCPGCDCDPVRTGGIARIVQSGRSTFYCPRHQR) adopts an FPG-type; atypical zinc-finger fold. Arginine 280 acts as the Proton donor; for delta-elimination activity in catalysis.

It belongs to the FPG family. In terms of assembly, monomer. Zn(2+) is required as a cofactor.

The enzyme catalyses Hydrolysis of DNA containing ring-opened 7-methylguanine residues, releasing 2,6-diamino-4-hydroxy-5-(N-methyl)formamidopyrimidine.. It carries out the reaction 2'-deoxyribonucleotide-(2'-deoxyribose 5'-phosphate)-2'-deoxyribonucleotide-DNA = a 3'-end 2'-deoxyribonucleotide-(2,3-dehydro-2,3-deoxyribose 5'-phosphate)-DNA + a 5'-end 5'-phospho-2'-deoxyribonucleoside-DNA + H(+). Involved in base excision repair of DNA damaged by oxidation or by mutagenic agents. Acts as a DNA glycosylase that recognizes and removes damaged bases. Has a preference for oxidized purines, such as 7,8-dihydro-8-oxoguanine (8-oxoG). Has AP (apurinic/apyrimidinic) lyase activity and introduces nicks in the DNA strand. Cleaves the DNA backbone by beta-delta elimination to generate a single-strand break at the site of the removed base with both 3'- and 5'-phosphates. The sequence is that of Formamidopyrimidine-DNA glycosylase from Rhodospirillum centenum (strain ATCC 51521 / SW).